A 319-amino-acid chain; its full sequence is ATP-dependent 6-phosphofructokinase (319 aa).

An ATP-binding site is contributed by glycine 11. 21–25 (RAVAR) is an ADP binding site. ATP-binding positions include 72–73 (RY) and 102–105 (GDGS). Residue aspartate 103 participates in Mg(2+) binding. 125–127 (TID) provides a ligand contact to substrate. The active-site Proton acceptor is the aspartate 127. Arginine 154 provides a ligand contact to ADP. Substrate-binding positions include arginine 162 and 169–171 (MGR). Residues 185–187 (GAE) and arginine 211 each bind ADP. Residues glutamate 222, arginine 243, and 249 to 252 (HIVR) contribute to the substrate site.

It belongs to the phosphofructokinase type A (PFKA) family. ATP-dependent PFK group I subfamily. Prokaryotic clade 'B1' sub-subfamily. Homotetramer. Mg(2+) is required as a cofactor.

It localises to the cytoplasm. It carries out the reaction beta-D-fructose 6-phosphate + ATP = beta-D-fructose 1,6-bisphosphate + ADP + H(+). Its pathway is carbohydrate degradation; glycolysis; D-glyceraldehyde 3-phosphate and glycerone phosphate from D-glucose: step 3/4. Allosterically activated by ADP and other diphosphonucleosides, and allosterically inhibited by phosphoenolpyruvate. Its function is as follows. Catalyzes the phosphorylation of D-fructose 6-phosphate to fructose 1,6-bisphosphate by ATP, the first committing step of glycolysis. The chain is ATP-dependent 6-phosphofructokinase from Lacticaseibacillus casei (strain BL23) (Lactobacillus casei).